The primary structure comprises 88 residues: Large ribosomal subunit protein bL27 (88 aa).

A disordered region spans residues Met-1–Leu-21.

Belongs to the bacterial ribosomal protein bL27 family.

This Mycobacterium sp. (strain MCS) protein is Large ribosomal subunit protein bL27.